A 110-amino-acid polypeptide reads, in one-letter code: Insulin (110 aa).

Residues 1–24 form the signal peptide; sequence MALWTRLLPLLALLALLGPDPAQA. 3 disulfides stabilise this stretch: C31–C96, C43–C109, and C95–C100. A propeptide spans 57–87 (c peptide); that stretch reads EVEEQQGGQVELGGGPGAGLPQPLALEMALQ.

It belongs to the insulin family. Heterodimer of a B chain and an A chain linked by two disulfide bonds.

Its subcellular location is the secreted. Functionally, insulin decreases blood glucose concentration. It increases cell permeability to monosaccharides, amino acids and fatty acids. It accelerates glycolysis, the pentose phosphate cycle, and glycogen synthesis in liver. This Ictidomys tridecemlineatus (Thirteen-lined ground squirrel) protein is Insulin (INS).